Reading from the N-terminus, the 515-residue chain is Ribosome assembly protein 4 (515 aa).

Positions 20-128 (REVAIIPKDL…LLYTPRAVFK (109 aa)) are interaction with MDN1. Positions 29 to 125 (LPNVSIKFQA…QITLLYTPRA (97 aa)) are ubiquitin-like (UBL) domain. 8 WD repeats span residues 141–181 (GHGS…PMHT), 184–223 (GHYN…CLGD), 227–273 (GHSK…CQYT), 276–314 (GHTN…RCIN), 352–396 (AQKK…KPIA), 400–439 (GHQK…FIST), 442–481 (GHVA…LSVD), and 484–515 (GHKD…LWTH).

Belongs to the NLE1/RSA4 family. As to quaternary structure, associates with the pre-60S ribosomal particle. Interacts (via WD repeats) with uL18 (RPL5). Interacts (via UBL domain) with MDN1 (via VWFA/MIDAS domain). Interacts (via WD repeats) with NSA2.

It localises to the nucleus. The protein localises to the nucleolus. Involved in ribosome biogenesis. Required for processing and efficient intra-nuclear transport of pre-60S ribosomal subunits. Interacts with the AAA-ATPase Midasin (MDN1/REA1), which is essential for the ATP-dependent dissociation of a group of nonribosomal factors from the pre-60S particle. The sequence is that of Ribosome assembly protein 4 from Saccharomyces cerevisiae (strain ATCC 204508 / S288c) (Baker's yeast).